The following is a 379-amino-acid chain: Armadillo repeat-containing X-linked protein 3 (379 aa).

At 1-6 (MGYARK) the chain is on the mitochondrial intermembrane side. Mitochondrion outer membrane (MOM)-targeting sequence regions lie at residues 1–6 (MGYARK) and 26–37 (RLTRGRKQNKEK). A helical; Signal-anchor transmembrane segment spans residues 7-29 (VGWVTAGLVIGAGACYCIYRLTR). Over 30-379 (GRKQNKEKMA…TERMFPKSQE (350 aa)) the chain is Cytoplasmic. Phosphoserine occurs at positions 61, 67, and 72. The tract at residues 89-98 (RARARARARA) is nuclear localization signal. Basic residues predominate over residues 95–106 (RARATRARRAVQ). Residues 95–116 (RARATRARRAVQKRASPNSDDT) are disordered. S110 is modified (phosphoserine). ARM repeat units lie at residues 111–151 (PNSD…NNAA), 153–192 (AFNR…NLSV), and 233–272 (VTNE…NLAE).

Belongs to the eutherian X-chromosome-specific Armcx family. As to quaternary structure, interacts (via ARM domain) with MIRO1, MIRO2 and TRAK2. The interaction with Miro is calcium-dependent. Interacts with Sox10. In terms of tissue distribution, highly expressed in the developing neural tissues, neural crest derivatives and hind limbs. Also widely expressed in the adult nervous tissue, especially in the forebrain, including the cerebral cortex, hippocampus and thalamus.

It localises to the mitochondrion outer membrane. The protein resides in the cytoplasm. Its subcellular location is the nucleus. Its function is as follows. Regulates mitochondrial aggregation and transport in axons in living neurons. May link mitochondria to the Trak2-kinesin motor complex via its interaction with Miro and Trak2. Mitochondrial distribution and dynamics is regulated through Armcx3 protein degradation, which is promoted by PCK and negatively regulated by Wnt1. Enhances the Sox10-mediated transactivation of the neuronal acetylcholine receptor subunit alpha-3 and beta-4 subunit gene promoters. The sequence is that of Armadillo repeat-containing X-linked protein 3 (Armcx3) from Mus musculus (Mouse).